Consider the following 227-residue polypeptide: uncharacterized protein (227 aa).

The next 7 membrane-spanning stretches (helical) occupy residues 25–45 (LLGFSFIPASAGAALAANAGF), 49–69 (AAFGSRWIGFAVVLAFFYGMI), 80–100 (TGVTLLMVFTFGMGVLIGPVL), 111–131 (KIVGIAAAMTAAVFLTMSALA), 144–164 (FLTVGAVILMVAVVANLFLGI), 165–185 (PALALTISAGFVLFSSLMIMW), and 201–221 (AALTLFISLYNIFSSLLNILL).

The protein localises to the cell membrane. This is an uncharacterized protein from Neisseria meningitidis serogroup B (strain ATCC BAA-335 / MC58).